The following is a 337-amino-acid chain: o-succinylbenzoate synthase (337 aa).

The active-site Proton donor is the Lys142. Positions 170, 199, and 222 each coordinate Mg(2+). Residue Lys248 is the Proton acceptor of the active site.

This sequence belongs to the mandelate racemase/muconate lactonizing enzyme family. MenC type 1 subfamily. A divalent metal cation is required as a cofactor.

The enzyme catalyses (1R,6R)-6-hydroxy-2-succinyl-cyclohexa-2,4-diene-1-carboxylate = 2-succinylbenzoate + H2O. Its pathway is quinol/quinone metabolism; 1,4-dihydroxy-2-naphthoate biosynthesis; 1,4-dihydroxy-2-naphthoate from chorismate: step 4/7. The protein operates within quinol/quinone metabolism; menaquinone biosynthesis. In terms of biological role, converts 2-succinyl-6-hydroxy-2,4-cyclohexadiene-1-carboxylate (SHCHC) to 2-succinylbenzoate (OSB). This chain is o-succinylbenzoate synthase, found in Pasteurella multocida (strain Pm70).